The chain runs to 353 residues: Photosystem II D2 protein (353 aa).

The residue at position 2 (threonine 2) is an N-acetylthreonine. Residue threonine 2 is modified to Phosphothreonine. The chain crosses the membrane as a helical span at residues 41–61 (CAYFALGGWFTGTTFVTSWYT). Histidine 118 is a binding site for chlorophyll a. A helical transmembrane segment spans residues 125-141 (GFMLRQFELARSVQLRP). Pheophytin a-binding residues include glutamine 130 and asparagine 143. Residues 153–166 (VFVSVFLIYPLGQS) traverse the membrane as a helical segment. Histidine 198 is a binding site for chlorophyll a. The helical transmembrane segment at 208-228 (AALLCAIHGATVENTLFEDGD) threads the bilayer. Positions 215 and 262 each coordinate a plastoquinone. Histidine 215 provides a ligand contact to Fe cation. A Fe cation-binding site is contributed by histidine 269. Residues 279 to 295 (GLWMSAIGVVGLALNLR) form a helical membrane-spanning segment.

It belongs to the reaction center PufL/M/PsbA/D family. In terms of assembly, PSII is composed of 1 copy each of membrane proteins PsbA, PsbB, PsbC, PsbD, PsbE, PsbF, PsbH, PsbI, PsbJ, PsbK, PsbL, PsbM, PsbT, PsbX, PsbY, PsbZ, Psb30/Ycf12, at least 3 peripheral proteins of the oxygen-evolving complex and a large number of cofactors. It forms dimeric complexes. Requires The D1/D2 heterodimer binds P680, chlorophylls that are the primary electron donor of PSII, and subsequent electron acceptors. It shares a non-heme iron and each subunit binds pheophytin, quinone, additional chlorophylls, carotenoids and lipids. There is also a Cl(-1) ion associated with D1 and D2, which is required for oxygen evolution. The PSII complex binds additional chlorophylls, carotenoids and specific lipids. as cofactor.

Its subcellular location is the plastid. The protein localises to the chloroplast thylakoid membrane. It carries out the reaction 2 a plastoquinone + 4 hnu + 2 H2O = 2 a plastoquinol + O2. Its function is as follows. Photosystem II (PSII) is a light-driven water:plastoquinone oxidoreductase that uses light energy to abstract electrons from H(2)O, generating O(2) and a proton gradient subsequently used for ATP formation. It consists of a core antenna complex that captures photons, and an electron transfer chain that converts photonic excitation into a charge separation. The D1/D2 (PsbA/PsbD) reaction center heterodimer binds P680, the primary electron donor of PSII as well as several subsequent electron acceptors. D2 is needed for assembly of a stable PSII complex. The sequence is that of Photosystem II D2 protein from Pinus thunbergii (Japanese black pine).